A 789-amino-acid chain; its full sequence is MRFTLSWLMQYLDTDASLDFIISKLSDIGLEVDSVDCKKHLQSFVVVEVIDVVPHHAADKLKVCQVYDGVQTFQVVCGASNVKVGMKSVLAYVGSVIPKNQTVIKVAKLRGVDSYGMLCSRDELGIAENDSTDEGIIELSDNTYNVGESFFSCDPVIELNITPNRGDCLGVYGIARDLAAAGVGKLKSVNFCDITFDNTCYISPIEICLEVQGIVKGVYIKGIRNCETPKWLKEYLFSCGVKSISCVVDIINYIMLSFNRPLHIYDADKIAGKLVFRKIDDQIEFFALNDKKYLLGKENIIAVDLANRIHSIVGVIGSEYSKCLFDTENIFLECAWFDPVDIALSSRKIKLSTDSSYRLERFVDPEFLQDGLKLATKMILEYCGGSPSSIVSVQNYVHNDILLNFSPDSVRNIGSVSITRDEIFDFLCNIGCVVKNHDCDIWIVIPPSWRSDLKHSFDLVEEVLRLYGYDKILENPIPISNIEFPDNLHNKLRSVLLSQGMTEVVTWSFTNLEFAKKFGYDSDIMLIDNPINNNMNLMRPSVLLNLLQVISENQAYGNNDAAIFEIGQIYNINSVCGDNNYVVSGVRYGDNLPRNFYKTDRSVDIFDVKSDFFKVLQEMNIGYDSVDLVRSTKSYLHPMKSADVYFNNILIGYFGELHPSIVHLYEIKRPIVCFEVFLYKIPVVDLTRKEFVELRYQSVKRDFAFLVSKNVNIQCLIEVAKKTNVQLIEDVSIFDIYEGNGIDKGMLSVALSVTFRSVDHTLNDQEIKDASDLIISAISKGFNGILRSC.

The tRNA-binding domain occupies 38 to 151; that stretch reads KKHLQSFVVV…NTYNVGESFF (114 aa). A B5 domain is found at 398–474; that stretch reads HNDILLNFSP…RLYGYDKILE (77 aa). 4 residues coordinate Mg(2+): Asp452, Asp458, Glu461, and Glu462. One can recognise an FDX-ACB domain in the interval 694–787; it reads LRYQSVKRDF…ISKGFNGILR (94 aa).

Belongs to the phenylalanyl-tRNA synthetase beta subunit family. Type 1 subfamily. Tetramer of two alpha and two beta subunits. Mg(2+) serves as cofactor.

It localises to the cytoplasm. It catalyses the reaction tRNA(Phe) + L-phenylalanine + ATP = L-phenylalanyl-tRNA(Phe) + AMP + diphosphate + H(+). This is Phenylalanine--tRNA ligase beta subunit from Ehrlichia ruminantium (strain Welgevonden).